The primary structure comprises 342 residues: N-acetyl-gamma-glutamyl-phosphate reductase (342 aa).

Residue cysteine 149 is part of the active site.

The protein belongs to the NAGSA dehydrogenase family. Type 1 subfamily.

It localises to the cytoplasm. It catalyses the reaction N-acetyl-L-glutamate 5-semialdehyde + phosphate + NADP(+) = N-acetyl-L-glutamyl 5-phosphate + NADPH + H(+). Its pathway is amino-acid biosynthesis; L-arginine biosynthesis; N(2)-acetyl-L-ornithine from L-glutamate: step 3/4. In terms of biological role, catalyzes the NADPH-dependent reduction of N-acetyl-5-glutamyl phosphate to yield N-acetyl-L-glutamate 5-semialdehyde. This is N-acetyl-gamma-glutamyl-phosphate reductase from Thiobacillus denitrificans (strain ATCC 25259 / T1).